Here is a 417-residue protein sequence, read N- to C-terminus: Fatty-acid peroxygenase (417 aa).

Residue C363 participates in heme binding.

The protein belongs to the cytochrome P450 family. The cofactor is heme.

It catalyses the reaction a 1,2-saturated fatty acid + H2O2 = a 2-hydroxy fatty acid + H2O. The catalysed reaction is a 2,3-saturated fatty acid + H2O2 = a 3-hydroxy fatty acid + H2O. It carries out the reaction tetradecanoate + H2O2 = (3R)-hydroxytetradecanoate + H2O. The enzyme catalyses tetradecanoate + H2O2 = (2R)-hydroxytetradecanoate + H2O. It catalyses the reaction tetradecanoate + H2O2 = (2S)-hydroxytetradecanoate + H2O. In terms of biological role, catalyzes the alpha- and beta-hydroxylation of myristic acid in the presence of hydrogen peroxide. In Bacillus subtilis (strain 168), this protein is Fatty-acid peroxygenase (cypC).